The sequence spans 147 residues: Small ribosomal subunit protein uS12 (147 aa).

The protein belongs to the universal ribosomal protein uS12 family. In terms of assembly, part of the 30S ribosomal subunit.

In terms of biological role, with S4 and S5 plays an important role in translational accuracy. Located at the interface of the 30S and 50S subunits. The polypeptide is Small ribosomal subunit protein uS12 (Thermococcus celer).